The primary structure comprises 175 residues: Large ribosomal subunit protein uL6 (175 aa).

This sequence belongs to the universal ribosomal protein uL6 family. Part of the 50S ribosomal subunit.

Its function is as follows. This protein binds to the 23S rRNA, and is important in its secondary structure. It is located near the subunit interface in the base of the L7/L12 stalk, and near the tRNA binding site of the peptidyltransferase center. The sequence is that of Large ribosomal subunit protein uL6 from Xylella fastidiosa (strain M23).